Here is a 51-residue protein sequence, read N- to C-terminus: Insulin (51 aa).

Disulfide bonds link C7–C37, C19–C50, and C36–C41.

The protein belongs to the insulin family. Heterodimer of a B chain and an A chain linked by two disulfide bonds.

The protein resides in the secreted. Functionally, insulin decreases blood glucose concentration. It increases cell permeability to monosaccharides, amino acids and fatty acids. It accelerates glycolysis, the pentose phosphate cycle, and glycogen synthesis in liver. This is Insulin (INS) from Acomys cahirinus (Cairo spiny mouse).